Here is a 477-residue protein sequence, read N- to C-terminus: Ribulose bisphosphate carboxylase large chain (477 aa).

Residues 1–2 (MS) constitute a propeptide that is removed on maturation. Position 3 is an N-acetylproline (proline 3). Lysine 14 bears the N6,N6,N6-trimethyllysine mark. Asparagine 123 and threonine 173 together coordinate substrate. The active-site Proton acceptor is lysine 175. Lysine 177 provides a ligand contact to substrate. Positions 201, 203, and 204 each coordinate Mg(2+). Lysine 201 carries the N6-carboxylysine modification. The Proton acceptor role is filled by histidine 294. Substrate contacts are provided by arginine 295, histidine 327, and serine 379.

The protein belongs to the RuBisCO large chain family. Type I subfamily. As to quaternary structure, heterohexadecamer of 8 large chains and 8 small chains; disulfide-linked. The disulfide link is formed within the large subunit homodimers. It depends on Mg(2+) as a cofactor. In terms of processing, the disulfide bond which can form in the large chain dimeric partners within the hexadecamer appears to be associated with oxidative stress and protein turnover.

Its subcellular location is the plastid. It localises to the chloroplast. It carries out the reaction 2 (2R)-3-phosphoglycerate + 2 H(+) = D-ribulose 1,5-bisphosphate + CO2 + H2O. The enzyme catalyses D-ribulose 1,5-bisphosphate + O2 = 2-phosphoglycolate + (2R)-3-phosphoglycerate + 2 H(+). Its function is as follows. RuBisCO catalyzes two reactions: the carboxylation of D-ribulose 1,5-bisphosphate, the primary event in carbon dioxide fixation, as well as the oxidative fragmentation of the pentose substrate in the photorespiration process. Both reactions occur simultaneously and in competition at the same active site. The polypeptide is Ribulose bisphosphate carboxylase large chain (Dioscorea elephantipes (Elephant's foot yam)).